Reading from the N-terminus, the 391-residue chain is Histamine H4 receptor (391 aa).

The Extracellular portion of the chain corresponds to 1–19; that stretch reads MSESNGTDVLPLTAQVPLA. N-linked (GlcNAc...) asparagine glycosylation occurs at Asn-5. The helical transmembrane segment at 20–40 threads the bilayer; it reads FLMSLLAFAITIGNAVVILAF. Residues 41-52 lie on the Cytoplasmic side of the membrane; that stretch reads VADRNLRHRSNY. The chain crosses the membrane as a helical span at residues 53–73; that stretch reads FFLNLAISDFFVGVISIPLYI. Topologically, residues 74–87 are extracellular; the sequence is PHTLFNWNFGSGIC. Residues Cys-87 and Cys-166 are joined by a disulfide bond. A helical membrane pass occupies residues 88 to 108; it reads MFWLITDYLLCTASVYSIVLI. Over 109–131 the chain is Cytoplasmic; it reads SYDRYQSVSNAVRYRAQHTGILK. Residues 132 to 152 form a helical membrane-spanning segment; sequence IVAQMVAVWILAFLVNGPMIL. The Extracellular segment spans residues 153 to 174; the sequence is ASDSWKNSTNTEECEPGFVTEW. The N-linked (GlcNAc...) asparagine glycan is linked to Asn-159. The chain crosses the membrane as a helical span at residues 175–195; sequence YILAITAFLEFLLPVSLVVYF. The Cytoplasmic segment spans residues 196–306; the sequence is SVQIYWSLWK…LLRGRKLARS (111 aa). Residues 307-327 form a helical membrane-spanning segment; sequence LAVLLSAFAICWAPYCLFTIV. Topologically, residues 328 to 343 are extracellular; sequence LSTYRRGERPKSIWYS. Residues 344–364 traverse the membrane as a helical segment; that stretch reads IAFWLQWFNSLINPFLYPLCH. Topologically, residues 365–391 are cytoplasmic; sequence RRFQKAFWKILCVTKQPAPSQTQSVSS.

Belongs to the G-protein coupled receptor 1 family. As to quaternary structure, interacts with TSPAN4.

It is found in the cell membrane. The H4 subclass of histamine receptors could mediate the histamine signals in peripheral tissues. Displays a significant level of constitutive activity (spontaneous activity in the absence of agonist). The polypeptide is Histamine H4 receptor (Hrh4) (Rattus norvegicus (Rat)).